The primary structure comprises 373 residues: ATP phosphoribosyltransferase regulatory subunit (373 aa).

This sequence belongs to the class-II aminoacyl-tRNA synthetase family. HisZ subfamily. As to quaternary structure, heteromultimer composed of HisG and HisZ subunits.

It is found in the cytoplasm. Its pathway is amino-acid biosynthesis; L-histidine biosynthesis; L-histidine from 5-phospho-alpha-D-ribose 1-diphosphate: step 1/9. Required for the first step of histidine biosynthesis. May allow the feedback regulation of ATP phosphoribosyltransferase activity by histidine. The polypeptide is ATP phosphoribosyltransferase regulatory subunit (Rhizobium johnstonii (strain DSM 114642 / LMG 32736 / 3841) (Rhizobium leguminosarum bv. viciae)).